The following is a 458-amino-acid chain: Probable M18 family aminopeptidase 1 (458 aa).

The Zn(2+) site is built by H95, H170, and H434.

It belongs to the peptidase M18 family. It depends on Zn(2+) as a cofactor.

This chain is Probable M18 family aminopeptidase 1, found in Borreliella afzelii (strain PKo) (Borrelia afzelii).